A 279-amino-acid chain; its full sequence is Putative phosphoenolpyruvate synthase regulatory protein (279 aa).

159–166 is a binding site for ADP; the sequence is GVSRSGKT.

The protein belongs to the pyruvate, phosphate/water dikinase regulatory protein family. PSRP subfamily.

It catalyses the reaction [pyruvate, water dikinase] + ADP = [pyruvate, water dikinase]-phosphate + AMP + H(+). The enzyme catalyses [pyruvate, water dikinase]-phosphate + phosphate + H(+) = [pyruvate, water dikinase] + diphosphate. Functionally, bifunctional serine/threonine kinase and phosphorylase involved in the regulation of the phosphoenolpyruvate synthase (PEPS) by catalyzing its phosphorylation/dephosphorylation. The protein is Putative phosphoenolpyruvate synthase regulatory protein of Ralstonia nicotianae (strain ATCC BAA-1114 / GMI1000) (Ralstonia solanacearum).